The sequence spans 907 residues: MAINSSHHFCPMTTTTTTSAKFVDSLGSSFCKFHGTSSSISLRSYRFGFSFMKNVKRLSCEGSSSSSSSRNENWNRTQKQNQFRPSKVVLNRRKDERFSDLGVISGENSSRSGDVGGGSGSSSTMEKIVEKLKKYGFVDEDQFQDKEVEQERRIEKSSVEERFYVEERRGGFSEESPFGVYGGNDEVKFPWEKVSSMEKKELVNGEWTAKKESRYSLAEMTLSEFELNRLRNVMFRTKSKMRVTGAGVTQAVVDAIQEKWKGSEIVRLKIEGSSALNMRRMHEILERKTGGLVIWRSGTSIALYNYKGGSNRDGSGNMNKQVYRRAERLPSSLPTSTVDQSVQLVNLPQLEKEPTVVGNKDRTSPQEVEYEDEINELLEGLGPRYTDWQGGYPLPVDADLLPGIVPGYEPPFRALPYGVRSTLGTKEATSLRRIATVLPPHFALGRSRQLQGLATAMVKLWQKSLIAKVALKRGVQLTTSERMAEDIKRLTGGMLLSRNKDFLVFYRGKSFLSLEVGEALMEKEMLVRTLQDEEEQARLRASSALVVPSIKANQQLARTLQDKEEQARPSALVLPSTKANQNLVSAGTLGETLDATGKWGKNLDNDDHVEEMKQEVEKVRSAKLVRKLERKLAFAEKKLLKAERALAKVEESLKPAEQRTDLEGITEEERFMFQKLGLKMKAFLLLGRRGVFDGTVENMHLHWKYRELIKILVKAKTLEGAQKVAMALEAESGGILVSVDKISKGYAVIVYRGKDYKRPTTLRPKNLLTKRKALARSLELQKREALIKHIEAIQTRSEQLRAEIEQVELVKDKGDETLYDKLDMAYSSDEETEETDGEEDDVYLDTYEDEGEDDEEGGIQANGSLSETDVEFGSDESDTDFGDNSASSTTPETTFVELQNEELDVQP.

The N-terminal 59 residues, 1–59 (MAINSSHHFCPMTTTTTTSAKFVDSLGSSFCKFHGTSSSISLRSYRFGFSFMKNVKRLS), are a transit peptide targeting the chloroplast. Disordered stretches follow at residues 62 to 89 (GSSS…SKVV) and 101 to 123 (LGVI…GSSS). Residues 70-84 (RNENWNRTQKQNQFR) are compositionally biased toward polar residues. CRM domains lie at 220–316 (MTLS…DGSG) and 421–518 (STLG…EVGE). Residues 621–654 (SAKLVRKLERKLAFAEKKLLKAERALAKVEESLK) are a coiled coil. In terms of domain architecture, CRM 3 spans 663 to 763 (EGITEEERFM…KDYKRPTTLR (101 aa)). Residues 824-907 (MAYSSDEETE…LQNEELDVQP (84 aa)) form a disordered region. Composition is skewed to acidic residues over residues 828–857 (SDEE…DEEG) and 868–881 (TDVE…DTDF). Positions 882–897 (GDNSASSTTPETTFVE) are enriched in polar residues.

In terms of assembly, interacts with RNA. Part of large ribonucleo-protein particles that contain CAF1 and/or CAF2, and RNC1. Interacts with RFC3 in plastids. Expressed at low levels in roots and shoots.

The protein localises to the plastid. It localises to the chloroplast. Its function is as follows. Binds specific group II introns in chloroplasts and facilitates their splicing. Exhibits non-specific action during plastid rRNA biogenesis; RFC3 prevents unaccurate splicing to improve the accuracy of plastid rRNA processing. Acts on subgroup IIB introns. The substrates of the subgroup IIB also require the CRM domain proteins CAF1 or CAF2, with a simultaneous binding of CFM3B and CAF1 or CAF2. Required for seed development. This is CRM-domain containing factor CFM3B, chloroplastic from Arabidopsis thaliana (Mouse-ear cress).